Here is a 512-residue protein sequence, read N- to C-terminus: Serine/threonine-protein kinase grp (512 aa).

Residues 22 to 279 (WTLAQTLGEG…LEKTLDHKWC (258 aa)) enclose the Protein kinase domain. ATP-binding positions include 28–36 (LGEGAYGEV) and Lys51. The active-site Proton acceptor is Asp143. Residues 335–360 (PTMRSDDDFNVRLGSGRSKEDGGDRQ) form a disordered region.

It belongs to the protein kinase superfamily. CAMK Ser/Thr protein kinase family. NIM1 subfamily. Post-translationally, phosphorylated in a MEI-41/ATR dependent manner in response to DNA damage or the presence of unreplicated DNA.

The protein resides in the nucleus. The enzyme catalyses L-seryl-[protein] + ATP = O-phospho-L-seryl-[protein] + ADP + H(+). It carries out the reaction L-threonyl-[protein] + ATP = O-phospho-L-threonyl-[protein] + ADP + H(+). Its function is as follows. Serine/threonine-protein kinase which is required for checkpoint-mediated cell cycle arrest and activation of DNA repair in response to the presence of DNA damage or unreplicated DNA. May also negatively regulate cell cycle progression during unperturbed cell cycles. May phosphorylate the CDC25 phosphatase stg, which promotes its degradation. This results in increased inhibitory tyrosine phosphorylation of Cdk1-cyclin complexes and consequent inhibition of cell cycle progression. This chain is Serine/threonine-protein kinase grp, found in Drosophila melanogaster (Fruit fly).